The chain runs to 367 residues: Cobalt-precorrin-5B C(1)-methyltransferase (367 aa).

This sequence belongs to the CbiD family.

The catalysed reaction is Co-precorrin-5B + S-adenosyl-L-methionine = Co-precorrin-6A + S-adenosyl-L-homocysteine. It functions in the pathway cofactor biosynthesis; adenosylcobalamin biosynthesis; cob(II)yrinate a,c-diamide from sirohydrochlorin (anaerobic route): step 6/10. In terms of biological role, catalyzes the methylation of C-1 in cobalt-precorrin-5B to form cobalt-precorrin-6A. This is Cobalt-precorrin-5B C(1)-methyltransferase from Leptospira interrogans serogroup Icterohaemorrhagiae serovar Lai (strain 56601).